We begin with the raw amino-acid sequence, 280 residues long: uncharacterized protein (280 aa).

6 consecutive transmembrane segments (helical) span residues 3–23 (ILIT…GMYI), 52–72 (FGLF…GSIV), 81–101 (INGL…NLQI), 123–143 (NWLV…LILL), 196–216 (FADI…IIIG), and 233–253 (IFAC…LLHI).

Its subcellular location is the cell membrane. This is an uncharacterized protein from Rickettsia prowazekii (strain Madrid E).